The chain runs to 144 residues: Peptide methionine sulfoxide reductase MsrB (144 aa).

Positions 1 to 12 (MDKQQGELRQRL) are enriched in basic and acidic residues. The interval 1–25 (MDKQQGELRQRLTPEQYAVTQEAAT) is disordered. A MsrB domain is found at 5–128 (QGELRQRLTP…NSAALKFIPV (124 aa)). Cys117 acts as the Nucleophile in catalysis.

The protein belongs to the MsrB Met sulfoxide reductase family.

The enzyme catalyses L-methionyl-[protein] + [thioredoxin]-disulfide + H2O = L-methionyl-(R)-S-oxide-[protein] + [thioredoxin]-dithiol. The protein is Peptide methionine sulfoxide reductase MsrB of Lactiplantibacillus plantarum (strain ATCC BAA-793 / NCIMB 8826 / WCFS1) (Lactobacillus plantarum).